An 839-amino-acid chain; its full sequence is Autophagy-related protein 9A (839 aa).

A disordered region spans residues 1–20 (MAQFDTEYQRLEASYSDSPP). N-acetylalanine is present on alanine 2. At 2-61 (AQFDTEYQRLEASYSDSPPGEEDLLVHVAEGSKSPWHHIENLDLFFSRVYNLHQKNGFTC) the chain is on the cytoplasmic side. The short motif at 8 to 11 (YQRL) is the Tyrosine-based sorting signal element. Phosphoserine occurs at positions 14, 16, and 18. The chain crosses the membrane as a helical span at residues 62-84 (MLIGEIFELMQFLFVVAFTTFLV). Residues 85 to 128 (SCVDYDILFANKMVNHSLHPTEPVKVTLPDAFLPAQVCSARIQE) lie on the Lumenal side of the membrane. N-linked (GlcNAc...) asparagine glycosylation is present at asparagine 99. A helical membrane pass occupies residues 129-154 (NGSLITILVIAGVFWIHRLIKFIYNI). At 155–290 (CCYWEIHSFY…ELAQRLSNRI (136 aa)) the chain is on the cytoplasmic side. An intramembrane segment occupies 291 to 301 (LWIGIANFLLC). The Cytoplasmic segment spans residues 302–319 (PLILIWQILYAFFSYAEV). The stretch at 320-328 (LKREPGALG) is an intramembrane region. Topologically, residues 329-371 (ARCWSLYGRCYLRHFNELEHELQSRLNRGYKPASKYMNCFLSP) are cytoplasmic. Residues 372–397 (LLTLLAKNGAFFAGSILAVLIALTIY) form a helical membrane-spanning segment. Residues 398 to 406 (DEDVLAVEH) lie on the Lumenal side of the membrane. The chain crosses the membrane as a helical span at residues 407–424 (VLTTVTLLGVTVTVCRSF). Residues 425-470 (IPDQHMVFCPEQLLRVILAHIHYMPDHWQGNAHRSQTRDEFAQLFQ) lie on the Cytoplasmic side of the membrane. An intramembrane segment occupies 471–480 (YKAVFILEEL). Residues 481–483 (LSP) lie on the Cytoplasmic side of the membrane. An intramembrane segment occupies 484–492 (IVTPLILIF). The Cytoplasmic segment spans residues 493 to 839 (CLRPRALEII…DELPPQVHKV (347 aa)). Phosphoserine is present on residues serine 656, serine 735, serine 738, serine 741, and serine 828. Disordered regions lie at residues 656 to 686 (SPLQPGQAPTGRAHSTMTGSGVDARTASSGS) and 717 to 839 (HKQQ…VHKV). The span at 724–736 (EPERHVWHRRESD) shows a compositional bias: basic and acidic residues. Composition is skewed to acidic residues over residues 737-747 (ESGESAPDEGG) and 823-832 (VPEEGSEDEL).

Belongs to the ATG9 family. In terms of assembly, homotrimer; forms a homotrimer with a central pore that forms a path between the two membrane leaflets. Interacts (via cytoplasmic its C-terminus) with ATG2A. Interacts with SUPT20H. Interacts (via the tyrosine-based sorting signal motif) with AP4M1; promoting association with the AP-4 complex. Interacts with ARFIP1 and ARFIP2. Interacts with PI4K2A and PI4KB. Interacts with ATG4A; the interaction is direct and promotes ATG9A trafficking. Ufmylated in a DDRGK1 dependent manner.

It is found in the preautophagosomal structure membrane. The protein resides in the cytoplasmic vesicle. The protein localises to the autophagosome membrane. It localises to the golgi apparatus. Its subcellular location is the trans-Golgi network membrane. It is found in the late endosome membrane. The protein resides in the recycling endosome membrane. The protein localises to the endoplasmic reticulum membrane. It localises to the mitochondrion membrane. The enzyme catalyses a 1,2-diacyl-sn-glycero-3-phosphocholine(in) = a 1,2-diacyl-sn-glycero-3-phosphocholine(out). It carries out the reaction a 1,2-diacyl-sn-glycero-3-phospho-L-serine(in) = a 1,2-diacyl-sn-glycero-3-phospho-L-serine(out). The catalysed reaction is a 1,2-diacyl-sn-glycero-3-phosphoethanolamine(in) = a 1,2-diacyl-sn-glycero-3-phosphoethanolamine(out). In terms of biological role, phospholipid scramblase involved in autophagy by mediating autophagosomal membrane expansion. Cycles between the preautophagosomal structure/phagophore assembly site (PAS) and the cytoplasmic vesicle pool and supplies membrane for the growing autophagosome. Lipid scramblase activity plays a key role in preautophagosomal structure/phagophore assembly by distributing the phospholipids that arrive through ATG2 (ATG2A or ATG2B) from the cytoplasmic to the luminal leaflet of the bilayer, thereby driving autophagosomal membrane expansion. Also required to supply phosphatidylinositol 4-phosphate to the autophagosome initiation site by recruiting the phosphatidylinositol 4-kinase beta (PI4KB) in a process dependent on ARFIP2, but not ARFIP1. In addition to autophagy, also plays a role in necrotic cell death. This chain is Autophagy-related protein 9A, found in Homo sapiens (Human).